A 393-amino-acid chain; its full sequence is DNA/RNA-binding protein KIN17 (393 aa).

The C2H2-type zinc-finger motif lies at 28–50 (CQMCQKQCRDENGFKCHCMSESH). Positions 51–160 (QRQLLLASEN…RQLELEKKKK (110 aa)) are winged helix-turn-helix (wHTH). The residue at position 135 (Lys135) is an N6,N6,N6-trimethyllysine; by METTL22; in vitro. Lys135 carries the post-translational modification N6-methyllysine. Positions 147 to 180 (ETIRRQLELEKKKKQDLDDEEKTAKFIEEQVRRG) form a coiled coil. Positions 209–224 (KGACSSSGATSSKSST) are enriched in low complexity. The tract at residues 209–260 (KGACSSSGATSSKSSTLGPSALKTIGSSASVKRKESSQSSTQSKEKKKKKSA) is disordered. Residues 250–277 (QSKEKKKKKSALDEIMEIEEEKKRTART) are a coiled coil. Residues 284–334 (EIIVKIITKKLGEKYHKKKAIVKEVIDKYTAVVKMIDSGDKLKLDQTHLET) form a C-terminal subdomain A region. The interval 340-391 (GKRILVLNGGYRGNEGTLESINEKTFSATIVIETGPLKGRRVEGIQYEDISK) is C-terminal subdomain B.

The protein belongs to the KIN17 family. In terms of assembly, associated with DNA polymerase alpha, RFC1 and cyclin A, in multiprotein DNA replication complexes. Also associates with replication origins at the G1/S phase boundary and throughout the S phase in vivo. As to quaternary structure, (Microbial infection) Interacts with SV40 large T antigen. As to expression, ubiquitously expressed in all tissues examined, with highest levels in skeletal muscle, heart and testis. Differentially expressed in non-tumorigenic and tumorigenic cell lines. Highly expressed in proliferating epithelial keratinocyte cells in vitro (at protein level).

The protein resides in the nucleus. It localises to the cytoplasm. Its function is as follows. Involved in DNA replication and the cellular response to DNA damage. May participate in DNA replication factories and create a bridge between DNA replication and repair mediated by high molecular weight complexes. May play a role in illegitimate recombination and regulation of gene expression. May participate in mRNA processing. Binds, in vitro, to double-stranded DNA. Also shown to bind preferentially to curved DNA in vitro and in vivo. Binds via its C-terminal domain to RNA in vitro. In Homo sapiens (Human), this protein is DNA/RNA-binding protein KIN17.